The primary structure comprises 97 residues: MGKTYRRKDLKVRDYDYFGKRKAPDGVSHKDMVENIFRSDKWRRMKGIDSEVKDELNRQLRGEVRKLKKSVYIDDDFDYNTSQRVAKRKSNECYRYS.

This is an uncharacterized protein from Enterobacteria phage T4 (Bacteriophage T4).